The following is a 302-amino-acid chain: ICOS ligand (302 aa).

Residues 1-18 form the signal peptide; that stretch reads MRLGSPGLLFLLFSSLRA. Positions 19–129 constitute an Ig-like V-type domain; the sequence is DTQEKEVRAM…LGFQEVLSVE (111 aa). The Extracellular portion of the chain corresponds to 19-256; it reads DTQEKEVRAM…VSTGEKNAAT (238 aa). Cysteines 37 and 113 form a disulfide. Residues Asn70, Asn137, Asn173, Asn186, and Asn225 are each glycosylated (N-linked (GlcNAc...) asparagine). One can recognise an Ig-like C2-type domain in the interval 141-227; the sequence is PVVSAPHSPS…ENVLLQQNLT (87 aa). A disulfide bridge links Cys158 with Cys216. The helical transmembrane segment at 257 to 277 threads the bilayer; that stretch reads WSILAVLCLLVVVAVAIGWVC. Topologically, residues 278–302 are cytoplasmic; it reads RDRCLQHSYAGAWAVSPETELTGHV.

Belongs to the immunoglobulin superfamily. BTN/MOG family. As to quaternary structure, interacts with CTLA4 (in vitro). In terms of tissue distribution, expressed on peripheral blood B-cells and monocytes, as well as on monocyte-derived dendritic cells (at protein level). Widely expressed (brain, heart, kidney, liver, lung, pancreas, placenta, skeletal muscle, bone marrow, colon, ovary, prostate, testis, lymph nodes, leukocytes, spleen, thymus and tonsil). As to expression, detected only in lymph nodes, leukocytes and spleen. Expressed on activated monocytes and dendritic cells.

It is found in the cell membrane. In terms of biological role, ligand for the T-cell-specific cell surface receptor ICOS. Acts as a costimulatory signal for T-cell proliferation and cytokine secretion. Also induces B-cell proliferation and differentiation into plasma cells. Could play an important role in mediating local tissue responses to inflammatory conditions, as well as in modulating the secondary immune response by co-stimulating memory T-cell function. In endothelial cells, required for proper neutrophil transmigration in response to chemoattractants, such as CXCL8/IL8 or N-formyl-methionyl peptides (fMLP). The sequence is that of ICOS ligand (ICOSLG) from Homo sapiens (Human).